The primary structure comprises 266 residues: Translation initiation factor 2 subunit alpha (266 aa).

The S1 motif domain occupies 12-83; the sequence is GEILIATVKQ…RKGTVDVSLK (72 aa).

Belongs to the eIF-2-alpha family. As to quaternary structure, heterotrimer composed of an alpha, a beta and a gamma chain.

Its function is as follows. eIF-2 functions in the early steps of protein synthesis by forming a ternary complex with GTP and initiator tRNA. This Saccharolobus islandicus (strain L.S.2.15 / Lassen #1) (Sulfolobus islandicus) protein is Translation initiation factor 2 subunit alpha.